Consider the following 224-residue polypeptide: Beta-casein (224 aa).

The signal sequence occupies residues 1–15; it reads MKVLILACLVALALA. S30, S32, S33, and S34 each carry phosphoserine. S50 is modified (phosphoserine; in variant A1, variant A2, variant A3, variant B, variant E, variant F, variant G and variant H).

The protein belongs to the beta-casein family. In terms of tissue distribution, mammary gland specific. Secreted in milk.

It localises to the secreted. Its function is as follows. Important role in determination of the surface properties of the casein micelles. In terms of biological role, casoparan acts as a macrophage activator, increasing the phagocytic activity of macrophages and peroxide release from macrophages. It also acts as a bradykinin-potentiating peptide. Casohypotensin acts as a bradykinin-potentiating peptide. Induces hypotension in rats. Acts as a strong competitive inhibitor of endo-oligopeptidase A. Functionally, antioxidant peptide has antioxidant activity. In Bos taurus (Bovine), this protein is Beta-casein (CSN2).